A 386-amino-acid chain; its full sequence is 8-amino-7-oxononanoate synthase (386 aa).

R31 contributes to the substrate binding site. G109–Y110 serves as a coordination point for pyridoxal 5'-phosphate. Position 134 (H134) interacts with substrate. Pyridoxal 5'-phosphate is bound by residues S180, D205 to H208, and T236 to K239. Residue K239 is modified to N6-(pyridoxal phosphate)lysine. T349 contacts substrate.

Belongs to the class-II pyridoxal-phosphate-dependent aminotransferase family. BioF subfamily. In terms of assembly, homodimer. The cofactor is pyridoxal 5'-phosphate.

It carries out the reaction 6-carboxyhexanoyl-[ACP] + L-alanine + H(+) = (8S)-8-amino-7-oxononanoate + holo-[ACP] + CO2. Its pathway is cofactor biosynthesis; biotin biosynthesis. In terms of biological role, catalyzes the decarboxylative condensation of pimeloyl-[acyl-carrier protein] and L-alanine to produce 8-amino-7-oxononanoate (AON), [acyl-carrier protein], and carbon dioxide. The polypeptide is 8-amino-7-oxononanoate synthase (Mycobacterium bovis (strain ATCC BAA-935 / AF2122/97)).